Here is a 693-residue protein sequence, read N- to C-terminus: ATP-dependent DNA helicase RecG (693 aa).

The tract at residues 48–146 (THLYPIGELL…GDLSTPELQE (99 aa)) is wedge domain. Residues 283–448 (DMALDVPMMR…AYADLDTSVI (166 aa)) form the Helicase ATP-binding domain. Residue 296 to 303 (GDVGSGKT) coordinates ATP. The DEAH box motif lies at 397 to 400 (DEQH). The Helicase C-terminal domain maps to 482 to 628 (EGRQAYWVCT…GFVIAQKDLE (147 aa)).

Belongs to the helicase family. RecG subfamily. As to quaternary structure, monomer.

The enzyme catalyses Couples ATP hydrolysis with the unwinding of duplex DNA by translocating in the 3'-5' direction.. It catalyses the reaction ATP + H2O = ADP + phosphate + H(+). Functionally, plays a critical role in recombination and DNA repair. Helps process Holliday junction intermediates to mature products by catalyzing branch migration. Has replication fork regression activity, unwinds stalled or blocked replication forks to make a HJ that can be resolved. Has a DNA unwinding activity characteristic of a DNA helicase with 3'-5' polarity. Plays a role in recovery after DNA ADP-ribosylation. The protein is ATP-dependent DNA helicase RecG of Escherichia coli O127:H6 (strain E2348/69 / EPEC).